The sequence spans 732 residues: Protein DIA2 (732 aa).

3 TPR repeats span residues 15-48 (VLKA…CDSY), 78-111 (IKIL…EPGN), and 113-145 (KCYI…CNND). The F-box domain occupies 204–251 (TDLVGNLPIEILPIIFQRFTTKELVTLSLVCNKWRDKILYHLDCFQEF). Ser393 carries the phosphoserine modification. LRR repeat units lie at residues 425 to 449 (LEKI…LLRG), 480 to 505 (FPDL…LLKF), 509 to 532 (WKNL…DEDQ), 550 to 574 (LQNL…LCEQ), 579 to 602 (GRKL…HAHT), 616 to 637 (LSKL…TMKS), and 645 to 669 (LENL…EFLK).

Belongs to the DIA2 family. In terms of assembly, component of the SCF(DIA2) complex containing CDC53, SKP1, RBX1 and DIA2. Interacts with SKP1.

It is found in the nucleus. In terms of biological role, F-box protein component of a SCF (SKP1-CUL1-F-box protein) E3 ubiquitin-protein ligase complex which mediates the ubiquitination and subsequent proteasomal degradation of target proteins. Probably recognizes and binds to phosphorylated target proteins. The SCF(DIA2) complex is specifically involved in the pheromone induced degradation of phosphorylated TEC1. The SCF(DIA2) complex binds to DNA replication origins. Involved in DNA replication, genome stability, and the control of cell cycle, probably through its association to replication origins to facilitate the ubiquitination of another origin-binding protein. Required for invasive growth and growth under alkaline conditions. The sequence is that of Protein DIA2 (DIA2) from Saccharomyces cerevisiae (strain ATCC 204508 / S288c) (Baker's yeast).